The following is a 331-amino-acid chain: 6-phosphogluconolactonase (331 aa).

The protein belongs to the cycloisomerase 2 family.

The catalysed reaction is 6-phospho-D-glucono-1,5-lactone + H2O = 6-phospho-D-gluconate + H(+). It participates in carbohydrate degradation; pentose phosphate pathway; D-ribulose 5-phosphate from D-glucose 6-phosphate (oxidative stage): step 2/3. Functionally, catalyzes the hydrolysis of 6-phosphogluconolactone to 6-phosphogluconate. The sequence is that of 6-phosphogluconolactonase from Buchnera aphidicola subsp. Baizongia pistaciae (strain Bp).